The sequence spans 240 residues: Type II restriction enzyme DdeI (240 aa).

The enzyme catalyses Endonucleolytic cleavage of DNA to give specific double-stranded fragments with terminal 5'-phosphates.. A P subtype restriction enzyme that recognizes the double-stranded sequence 5'-CTNAG-3' and cleaves after C-1. This Desulfomicrobium norvegicum (strain DSM 1741 / NCIMB 8310) (Desulfovibrio baculatus (strain Norway 4)) protein is Type II restriction enzyme DdeI (ddeIR).